The primary structure comprises 487 residues: MFVLDPAAICCCAVTCCCGVGSVCAYRKRQSIPHPSECALIGKMYRLCGCHDHDKFDVLIEIHEIHDLTQSGKFFVEVHAGRSEERTGVCSAKKGRVEIQERVNIHVRQADKTLTVRVKKQGLTSTEAIGDAVIGVKSELIDGAFPKRQSFFCQKDGKTACKIVLSFHRLDTGNVSLGDFQMSPLLHQALLIAQSEAEARGETLQVDILNMTEVERLRFLSKVLEGPLKQMSSIGGAWKNLYFRAAERRNGKWEWQYWSSKDDCMSGIKKRGAYSFMAISLVLPDKHDRHCFYIRYHDTGGVHDLFFKRVDRDRNLWSDGLFEFIEKLREYLEKHPEVAMSGRGGHSSRREKKKEGDVGGSRTPRKRDGKALTPRTGASDDAGDDGIRGRSPRGSDRRALSHRSFVDPAELAEKRRVLSPRETAADEMTRPRASVLKGRMIEGLMYDRSLQPGEKNEEASEADERPRERTEGVEYEREEEQPLLFTQ.

Residues 337-487 (EVAMSGRGGH…EEEQPLLFTQ (151 aa)) form a disordered region. Composition is skewed to basic and acidic residues over residues 385–399 (DGIR…DRRA) and 454–475 (EKNE…GVEY).

In terms of assembly, interacts with RASP2.

It is found in the cytoplasmic vesicle. The protein resides in the secretory vesicle. It localises to the rhoptry membrane. The sequence is that of Rhoptry apical surface protein 1 from Toxoplasma gondii (strain ATCC 50853 / GT1).